Here is a 996-residue protein sequence, read N- to C-terminus: Protein psiR (996 aa).

Positions 1 to 21 (MKKIILMLLLFSIFFILKSES) are cleaved as a signal peptide. Residues Asn-79, Asn-117, Asn-323, Asn-396, Asn-428, Asn-474, Asn-500, Asn-645, and Asn-779 are each glycosylated (N-linked (GlcNAc...) asparagine). The PA14 domain occupies 105 to 250 (QSLSNPNIYS…YDECGVCEGD (146 aa)).

This sequence belongs to the prespore-cell-inducing factor family.

It is found in the secreted. This is Protein psiR (psiR) from Dictyostelium discoideum (Social amoeba).